Consider the following 1977-residue polypeptide: MAARSAPSCHLRLEWVYGYRGHQCRNNLYYTAAKEIVYFVAGVGVVYSPREHRQKFYRGHSDDIISLALHPERVLVATGQVGKEPYICVWDSYTVQTVSVLKDVHTHGIACLAFDLDGQRLVSVGLDSKNAVCVWDWKRGKMLSMAPGHTDRIFDISWDLYQPNKLVSCGVKHIKFWSLCGNALTPKRGVFGKTGDLQTILCLACARDELTYSGALNGDIYVWKGINLIRTIQGAHTAGIFSMNACEEGFATGGRDGCIRLWDLTFKPITVIDLRETEQGYKGLSVRSVCWRGDHILVGTQDSEIFEIVVHERNKPFLIMQGHCEGELWALAVHPTKPLAVTGSDDRSVRIWSLVDHALIARCNMDEPIRCAAVNADGVHLALGMKDGSLTVLRVRDMTEVVHIKDRKEAIHELKYSPDGTYLAVGCNDSSVDIYGVAQRYKKVGECVGSLSFITHLDWSSDSKYLQTNDGSGKRLLYKMPGGKEVTSKEEVKGMHWASWTCVAGLEVNGIWPKYSDINDINSVDGNYVGQVLVTADDYGVVKLFRYPCLRKGAKFRKYIGHSAHVTNVRWSHDYQWVISIGGADHSVFQWKFIPERKLKDALHIAPQESLTESNSDESDSDLSDVPELDSEIEQETQLTYHRQVYKEDLPQLKEQCKEKQKSATSKRRERAPGNSIRLHFIHGYRGYDCRSNLFYTQIGEIVYHVAAVGVIYNRQQNTQRFYLGHDDDILCLAIHPLKDYVATGQVGRDPSIHVWDTETIKPLSILKGYHQYGICAVDFSADGKRLASVGIDDSHTIVLWDWKKGEKLSVARGSKDKIFVVKMNPYVPDKLITAGIKHMKFWRRAGGGLIGRKGYVGTLGKNDTMMCAVYGWTEEMAFSGTSTGDVCIWRDVFLVKTVKAHDGPVFSMHALEKGFVTGGKDGVVALWDDSFERCLKTYAIKRADLAPGSKGLLLEDNPSIRAISLGHGHILVGTKNGEILEVDKSGPVTLLVQGHMEGEVWGLATHPYLPICATVSDDKTLRIWDLSPSHCMLAVRKLKKGGRCCCFSPDGKALAVGLNDGSFLMANADTLEDLVSFHHRKDVISDIQFSPGSGKYLAVASHDSFVDIYNVTSSKRVGVCKGATSYITHIDWDSRGKLLQVNTGAKEQLFFEAPRGKKQTIPSVEVEKISWATWTSVLGLCCEGIWPIIGEVTDVTASCLTSDKMVLATGDDLGFVKLFRYPAKGKFGKFKKYVAHSTHVTNVRWTYDDSMLVTLGGADMSLMVWTSEVERHREKKNCDSEESDTDSEEDGGYDSDVTRENEISYTIRALSTNIRPMFGVKPHLQQKEPSVDERQGVVRGSRPPVSRAPPQPEKLQSNNVGKKKRPIEDLVLELAFGYRGRDCRNNVHYLNDGDDIIYHTASVGILHNVATGTQSFYQEHNDDILCLTVNQHPKFINIVATGQVGDSADMSATAPSVHIWDAVNKQTLSILRCSHSKGVCSVSFSATGKLLLSVGLDPEHTVTIWRWQEGAKIASRGGHNQRIFVAEFRPDSDTQFVSVGIKHVKFWTLAGRALLSKKGLLSTLEDARMQTMLAVAFGANNLTFTGTISGDVCVWKDHILCRVVARAHNGPVFAMYTTLRDGLIVTGGKERPSKEGGAVKLWDQELRRCRAFRLETGQVTDCVRSVCRGKGKILVGTRNSEIIEVGEKNAACNILVNGHVDGPIWGLATHPSRDFFLSAAEDGTVRLWDIADKKMLNKVNLGHAARTVCYSPEGDMVAIGMKNGEFIILLVSSLKIWGKKRDRRCAIHDIRFSPDSRYLAVGSSENSVDFYDLTLGPTLNRISYCKDIPSFVIQMDFSADSRHLQVSSGCYKRHVYEVPSGKHLVDHAAIDRITWATWTSILGDEVMGIWSRHAEKADVTCACVSHSGISLVTGDDFGMVKLYDFPCPEKFAKHKRFLGHSPHVTNIRFTSGDRHVVSAGGDDCSVFVWKCVHTPH.

WD repeat units follow at residues Gly-59 to Val-100, Val-104 to Met-145, Gly-148 to Lys-187, Gly-195 to Gln-233, Ala-235 to Asp-273, Gly-280 to Gln-321, His-323 to Arg-362, Asn-364 to His-403, Asp-406 to Gly-445, Gly-449 to Ser-488, and Gly-561 to Asp-601. Residues Glu-609–Leu-629 are disordered. Positions Asn-615–Leu-629 are enriched in acidic residues. WD repeat units follow at residues Gly-725–Ile-766, Tyr-770–Val-811, Gly-814–Arg-853, Gly-861–Lys-900, Ala-901–Ala-940, His-996–Ala-1035, Lys-1038–Ser-1077, His-1080–Val-1120, and Ala-1236–Lys-1276. Disordered stretches follow at residues Arg-1274–Thr-1299 and Pro-1323–Lys-1363. A compositionally biased stretch (acidic residues) spans Ser-1281–Tyr-1294. Residues Gln-1326–Gly-1337 are compositionally biased toward basic and acidic residues. WD repeat units follow at residues Glu-1420–Ile-1471, Ser-1475–Ser-1516, Gly-1519–Lys-1558, Ala-1568–Ala-1606, Ala-1608–Arg-1654, Gly-1699–Lys-1739, Asn-1741–Arg-1782, Asp-1783–Arg-1822, Ala-1895–Lys-1934, and Gly-1940–His-1977.

It belongs to the WD repeat EMAP family. Highly expressed in brain, especially in hippocampus, cerebellum and olfactory bulb (at protein level).

The protein resides in the cytoplasm. The protein localises to the cytoskeleton. In terms of biological role, may modify the assembly dynamics of microtubules, such that microtubules are slightly longer, but more dynamic. The protein is Echinoderm microtubule-associated protein-like 5 (Eml5) of Rattus norvegicus (Rat).